We begin with the raw amino-acid sequence, 398 residues long: Mitogen-activated protein kinase 1 (398 aa).

The tract at residues 1 to 26 is disordered; sequence MDAGAQPPDTEMAEAGGGQQPPAAAA. The Protein kinase domain occupies 67-352; the sequence is KPPILPIGKG…VEGALAHPYL (286 aa). Residues 73–81 and K96 contribute to the ATP site; that span reads IGKGAYGIV. Catalysis depends on D193, which acts as the Proton acceptor. T225 carries the phosphothreonine modification. The TXY motif lies at 225–227; the sequence is TEY. Y227 carries the post-translational modification Phosphotyrosine.

Belongs to the protein kinase superfamily. CMGC Ser/Thr protein kinase family. MAP kinase subfamily. As to quaternary structure, may interact with RAC1. In terms of processing, dually phosphorylated on Thr-225 and Tyr-227, which activates the enzyme.

It catalyses the reaction L-seryl-[protein] + ATP = O-phospho-L-seryl-[protein] + ADP + H(+). The catalysed reaction is L-threonyl-[protein] + ATP = O-phospho-L-threonyl-[protein] + ADP + H(+). Its activity is regulated as follows. Activated by threonine and tyrosine phosphorylation. Activated in response to sphingolipid elicitor (SE). Its function is as follows. Involved in sphingolipid elicitor (SE)-dependent defense signaling pathway. Acts downstream of heterotrimeric G protein alpha subunit and small GTPase RAC1. May regulate the expression of various genes involved in biotic and abiotic stress response. Involved in an abscisic acid signaling pathway that regulates the activities of antioxidant enzymes and the production of hydrogen peroxide. Acts downstream of CCAMK. The chain is Mitogen-activated protein kinase 1 (MPK1) from Oryza sativa subsp. japonica (Rice).